The primary structure comprises 254 residues: MLEKFSLEGKVALVTGCKRGIGKGIALGLAEAGADIIGVSASLALEGSDVENEVKALGRNFKGYQCDFSDRDALYAFIKEVKADFPKIDILVNNAGTILRAPAAEHGDDLWDKVIDVNLNSQFILSREIGKEMVARQSGKIIFTASLLTFQGGITVPGYAASKGAIGQLVMALSNEWAGKGVNVNAIAPGYIDTDNTQALREDSERSAAILGRIPQGRWGNPDDFKGPAVFLASDAASYVNGAILLVDGGWMGR.

Catalysis depends on Tyr-159, which acts as the Proton acceptor.

The protein belongs to the short-chain dehydrogenases/reductases (SDR) family.

It carries out the reaction 2-dehydro-3-deoxy-D-gluconate + NAD(+) = 3-deoxy-D-glycero-2,5-hexodiulosonate + NADH + H(+). Involved in the degradation of 3,6-anhydro-L-galactose, which is the major monomeric sugar of red macroalgae. Catalyzes the fourth step of the pathway, the reduction of 3-deoxy-D-glycero-2,5-hexodiulosonate (L-DDGal) to 2-dehydro-3-deoxy-D-gluconate (KDG). In Pseudoalteromonas atlantica (strain T6c / ATCC BAA-1087), this protein is 2-dehydro-3-deoxy-D-gluconate 5-dehydrogenase.